The sequence spans 201 residues: MSFATLRPAPPGRYLYPEVSPLSEDEDRGSDSSGSDEKPCRVHAARCGLQGARRRAGGRRAGGGGPGGRPGREPRQRHTANARERDRTNSVNTAFTALRTLIPTEPADRKLSKIETLRLASSYISHLGNVLLAGEACGDGQPCHSGPAFFHAARAGSPPPPPPPPPARDGENTQPKQICTFCLSNQRKLSKDRDRKTAIRS.

2 disordered regions span residues Met-1–Asn-92 and Ala-148–Gln-177. A compositionally biased stretch (gly residues) spans Arg-59 to Arg-69. Residues Pro-70 to Thr-88 show a composition bias toward basic and acidic residues. One can recognise a bHLH domain in the interval Arg-75–Leu-127. The segment covering Ser-157–Ala-167 has biased composition (pro residues).

Efficient DNA binding requires dimerization with another bHLH protein. Dimerizes and binds the E-box consensus sequence with E12.

Its subcellular location is the nucleus. In terms of biological role, plays an early essential role in mesoderm formation, as well as a later role in formation of somite-derived chondrogenic lineages. This is Basic helix-loop-helix transcription factor scleraxis (SCX) from Homo sapiens (Human).